Here is a 2090-residue protein sequence, read N- to C-terminus: MGDEMDAMIPEREMKDFQFRALKKVRIFDSPEELPKERSSLLAVSNKYGLVFAGGASGLQIFPTKNLLIQNKPGDDPNKIVDKVQGLLVPMKFPIHHLALSCDNLTLSACMMSSEYGSIIAFFDVRTFSNEAKQQKRPFAYHKLLKDAGGMVIDMKWNPTVPSMVAVCLADGSIAVLQVTETVKVCATLPSTVAVTSVCWSPKGKQLAVGKQNGTVVQYLPTLQEKKVIPCPPFYESDHPVRVLDVLWIGTYVFAIVYAAADGTLETSPDVVMALLPKKEEKHPEIFVNFMEPCYGSCTERQHHYYLSYIEEWDLVLAASAASTEVSILARQSDQINWESWLLEDSSRAELPVTDKSDDSLPMGVVVDYTNQVEITISDEKTLPPAPVLMLLSTDGVLCPFYMINQNPGVKSLIKTPERLSLEGERQPKSPGSTPTTPTSSQAPQKLDASAAAAPASLPPSSPAAPIATFSLLPAGGAPTVFSFGSSSLKSSATVTGEPPSYSSGSDSSKAAPGPGPSTFSFVPPSKASLAPTPAASPVAPSAASFSFGSSGFKPTLESTPVPSVSAPNIAMKPSFPPSTSAVKVNLSEKFTAAATSTPVSSSQSAPPMSPFSSASKPAASGPLSHPTPLSAPPSSVPLKSSVLPSPSGRSAQGSSSPVPSMVQKSPRITPPAAKPGSPQAKSLQPAVAEKQGHQWKDSDPVMAGIGEEIAHFQKELEELKARTSKACFQVGTSEEMKMLRTESDDLHTFLLEIKETTESLHGDISSLKTTLLEGFAGVEEAREQNERNRDSGYLHLLYKRPLDPKSEAQLQEIRRLHQYVKFAVQDVNDVLDLEWDQHLEQKKKQRHLLVPERETLFNTLANNREIINQQRKRLNHLVDSLQQLRLYKQTSLWSLSSAVPSQSSIHSFDSDLESLCNALLKTTIESHTKSLPKVPAKLSPMKQAQLRNFLAKRKTPPVRSTAPASLSRSAFLSQRYYEDLDEVSSTSSVSQSLESEDARTSCKDDEAVVQAPRHAPVVRTPSIQPSLLPHAAPFAKSHLVHGSSPGVMGTSVATSASKIIPQGADSTMLATKTVKHGAPSPSHPISAPQAAAAAALRRQMASQAPAVNTLTESTLKNVPQVVNVQELKNNPATPSTAMGSSVPYSTAKTPHPVLTPVAANQAKQGSLINSLKPSGPTPASGQLSSGDKASGTAKIETAVTSTPSASGQFSKPFSFSPSGTGFNFGIITPTPSSNFTAAQGATPSTKESSQPDAFSSGGGSKPSYEAIPESSPPSGITSASNTTPGEPAASSSRPVAPSGTALSTTSSKLETPPSKLGELLFPSSLAGETLGSFSGLRVGQADDSTKPTNKASSTSLTSTQPTKTSGVPSGFNFTAPPVLGKHTEPPVTSSATTTSVAPPAATSTSSTAVFGSLPVTSAGSSGVISFGGTSLSAGKTSFSFGSQQTNSTVPPSAPPPTTAATPLPTSFPTLSFGSLLSSATTPSLPMSAGRSTEEATSSALPEKPGDSEVSASAASLLEEQQSAQLPQAPPQTSDSVKKEPVLAQPAVSNSGTAASSTSLVALSAEATPATTGVPDARTEAVPPASSFSVPGQTAVTAAAISSAGPVAVETSSTPIASSTTSIVAPGPSAEAAAFGTVTSGSSVFAQPPAASSSSAFNQLTNNTATAPSATPVFGQVAASTAPSLFGQQTGSTASTAAATPQVSSSGFSSPAFGTTAPGVFGQTTFGQASVFGQSASSAASVFSFSQPGFSSVPAFGQPASSTPTSTSGSVFGAASSTSSSSSFSFGQSSPNTGGGLFGQSNAPAFGQSPGFGQGGSVFGGTSAATTTAATSGFSFCQASGFGSSNTGSVFGQAASTGGIVFGQQSSSSSGSVFGSGNTGRGGGFFSGLGGKPSQDAANKNPFSSASGGFGSTATSNTSNLFGNSGAKTFGGFASSSFGEQKPTGTFSSGGGSVASQGFGFSSPNKTGGFGAAPVFGSPPTFGGSPGFGGVPAFGSAPAFTSPLGSTGGKVFGEGTAAASAGGFGFGSSSNTTSFGTLASQNAPTFGSLSQQTSGFGTQSSGFSGFGSGTGGFSFGSNNSSVQGFGGWRS.

Gly2 is modified (N-acetylglycine). The residue at position 30 (Ser30) is a Phosphoserine. Blade repeat units lie at residues 41–93 (LLAV…PMKF), 94–150 (PIHH…DAGG), 151–193 (MVID…PSTV), 194–239 (AVTS…ESDH), 240–303 (PVRV…ERQH), 304–359 (HYYL…KSDD), and 360–404 (SLPM…FYMI). Positions 41–404 (LLAVSNKYGL…DGVLCPFYMI (364 aa)) are seven-bladed beta propeller. The segment at 236–1418 (ESDHPVRVLD…AVFGSLPVTS (1183 aa)) is 44 X 2 AA repeats of F-G. Thr416 carries the post-translational modification Phosphothreonine. A phosphoserine mark is found at Ser421, Ser430, and Ser433. Residues 422 to 460 (LEGERQPKSPGSTPTTPTSSQAPQKLDASAAAAPASLPP) are disordered. The span at 429–441 (KSPGSTPTTPTSS) shows a compositional bias: low complexity. 3 positions are modified to phosphothreonine: Thr434, Thr437, and Thr439. Residues 450 to 586 (SAAAAPASLP…PPSTSAVKVN (137 aa)) are (Microbial infection) Binds human adenovirus 5 (HAdV-5) protein L3 (hexon). The segment at 481–2076 (VFSFGSSSLK…GSGTGGFSFG (1596 aa)) is 11 X 5 AA approximate repeats. Repeat unit 1 spans residues 484 to 485 (FG). Composition is skewed to low complexity over residues 489–513 (LKSS…KAAP) and 524–536 (PPSK…TPAA). A disordered region spans residues 489–536 (LKSSATVTGEPPSYSSGSDSSKAAPGPGPSTFSFVPPSKASLAPTPAA). The stretch at 548–549 (FG) is repeat 2. Low complexity-rich tracts occupy residues 597–629 (STPV…HPTP) and 637–658 (VPLK…SSSP). Positions 597 to 700 (STPVSSSQSA…KQGHQWKDSD (104 aa)) are disordered. 3 positions are modified to phosphoserine: Ser651, Ser657, and Ser666. Position 670 is a phosphothreonine (Thr670). Ser678 carries the phosphoserine modification. Residues 680-1209 (QAKSLQPAVA…VTSTPSASGQ (530 aa)) adopt a coiled-coil conformation. Basic and acidic residues predominate over residues 691–700 (KQGHQWKDSD). Leucine-zipper stretches follow at residues 740–768 (LRTE…ISSL) and 861–882 (LANN…VDSL). Ser760 bears the Phosphoserine mark. Ser940, Ser970, Ser974, and Ser989 each carry phosphoserine. Residues 987-1009 (TSSVSQSLESEDARTSCKDDEAV) are disordered. Residues 997-1007 (EDARTSCKDDE) are compositionally biased toward basic and acidic residues. Position 1021 is a phosphothreonine (Thr1021). Phosphoserine occurs at positions 1023, 1045, 1056, and 1081. The span at 1128 to 1149 (LKNNPATPSTAMGSSVPYSTAK) shows a compositional bias: polar residues. The segment at 1128–1152 (LKNNPATPSTAMGSSVPYSTAKTPH) is disordered. Phosphothreonine occurs at positions 1134, 1150, and 1156. Polar residues-rich tracts occupy residues 1168 to 1188 (LINS…SSGD) and 1199 to 1213 (AVTS…FSKP). The segment at 1168–1213 (LINSLKPSGPTPASGQLSSGDKASGTAKIETAVTSTPSASGQFSKP) is disordered. At Ser1181 the chain carries Phosphoserine. Repeat 3 spans residues 1225-1226 (FG). 2 stretches are compositionally biased toward polar residues: residues 1234-1254 (SNFT…QPDA) and 1273-1285 (PPSG…NTTP). Disordered regions lie at residues 1234–1316 (SNFT…PPSK) and 1337–1408 (LRVG…TSST). Over residues 1288–1299 (PAASSSRPVAPS) the composition is skewed to low complexity. Positions 1301–1310 (TALSTTSSKL) are enriched in polar residues. Thr1312 carries the phosphothreonine modification. Positions 1347–1368 (KPTNKASSTSLTSTQPTKTSGV) are enriched in polar residues. Residue Ser1353 is modified to Phosphoserine. Positions 1386 to 1408 (PPVTSSATTTSVAPPAATSTSST) are enriched in low complexity. The tract at residues 1409 to 2084 (AVFGSLPVTS…FGSNNSSVQG (676 aa)) is 18 X 4 AA approximate repeats. 4 tandem repeats follow at residues 1411 to 1412 (FG), 1427 to 1428 (FG), 1441 to 1442 (FG), and 1473 to 1474 (FG). The segment at 1427 to 2085 (FGGTSLSAGK…GSNNSSVQGF (659 aa)) is 11 X 3 AA approximate repeats. Residues 1438 to 1450 (SFSFGSQQTNSTV) show a composition bias toward polar residues. The disordered stretch occupies residues 1438 to 1467 (SFSFGSQQTNSTVPPSAPPPTTAATPLPTS). 2 stretches are compositionally biased toward low complexity: residues 1479 to 1489 (SATTPSLPMSA) and 1508 to 1527 (SEVS…AQLP). Positions 1479-1539 (SATTPSLPMS…PPQTSDSVKK (61 aa)) are disordered. Lys1538 participates in a covalent cross-link: Glycyl lysine isopeptide (Lys-Gly) (interchain with G-Cter in SUMO2). Repeat copies occupy residues 1635 to 1636 (FG), 1674 to 1675 (FG), 1686 to 1687 (FG), 1713 to 1714 (FG), 1721 to 1722 (FG), 1726 to 1727 (FG), 1732 to 1733 (FG), 1756 to 1757 (FG), 1772 to 1773 (FG), 1786 to 1787 (FG), 1798 to 1799 (FG), 1806 to 1807 (FG), 1812 to 1813 (FG), 1819 to 1820 (FG), 1842 to 1843 (FG), 1851 to 1852 (FG), 1862 to 1863 (FG), and 1874 to 1875 (FG). A disordered region spans residues 1884–1903 (GFFSGLGGKPSQDAANKNPF). Repeat copies occupy residues 1910–1911 (FG), 1922–1923 (FG), 1930–1931 (FG), 1938–1939 (FG), and 1959–1960 (FG). Residue Ser1963 is modified to Phosphoserine. 3 tandem repeats follow at residues 1970 to 1971 (FG), 1976 to 1977 (FG), and 1982 to 1983 (FG). Position 1985 is a phosphoserine (Ser1985). 11 tandem repeats follow at residues 1988 to 1989 (FG), 1994 to 1995 (FG), 2012 to 2013 (FG), 2024 to 2025 (FG), 2026 to 2027 (FG), 2035 to 2036 (FG), 2046 to 2047 (FG), 2056 to 2057 (FG), 2066 to 2067 (FG), 2075 to 2076 (FG), and 2085 to 2086 (FG).

In terms of assembly, homodimer. Part of the nuclear pore complex (NPC). Interacts with NUP88. Interacts with ZFP36; this interaction increases upon lipopolysaccharide (LPS) stimulation. Interacts with DDX19. Interacts with XPO1. Interacts with XPO5. (Microbial infection) Interacts with human herpes virus 1 (HHV-1) protein UL25; this interaction might be essential to the capsid docking onto the host nuclear pore. As to quaternary structure, (Microbial infection) Interacts (via N-terminus) with human adenovirus 5 (HAdV-5) protein L3 (hexon); this interaction might be essential for the release of the virus genome to the nucleus. Probably glycosylated as it reacts with wheat germ agglutinin (WGA). In terms of tissue distribution, expressed in thymus, spleen, bone marrow, kidney, brain and testis, but hardly in all other tissues or in whole embryos during development.

Its subcellular location is the nucleus. It localises to the nuclear pore complex. Its function is as follows. Part of the nuclear pore complex. Has a critical role in nucleocytoplasmic transport. May serve as a docking site in the receptor-mediated import of substrates across the nuclear pore complex. (Microbial infection) Required for capsid disassembly of the human adenovirus 5 (HadV-5) leading to release of the viral genome to the nucleus (in vitro). The protein is Nuclear pore complex protein Nup214 (NUP214) of Homo sapiens (Human).